Here is a 430-residue protein sequence, read N- to C-terminus: Zinc carboxypeptidase A 1 (430 aa).

A signal peptide spans 1–22 (MSLNKCLLFALLAIVASASVSA). Residues 124 to 423 (QYYELDDTYA…DSIVAMATEV (300 aa)) enclose the Peptidase M14 domain. Zn(2+)-binding residues include His-187 and Glu-190. The cysteines at positions 252 and 275 are disulfide-linked. Position 311 (His-311) interacts with Zn(2+). Glu-386 functions as the Proton donor/acceptor in the catalytic mechanism.

It belongs to the peptidase M14 family. The cofactor is Zn(2+).

It localises to the secreted. The sequence is that of Zinc carboxypeptidase A 1 from Drosophila melanogaster (Fruit fly).